Reading from the N-terminus, the 343-residue chain is Biotin synthase (343 aa).

Residues 36-254 (NTIQISTLLS…IAVARIMMPK (219 aa)) enclose the Radical SAM core domain. [4Fe-4S] cluster is bound by residues cysteine 51, cysteine 55, and cysteine 58. 4 residues coordinate [2Fe-2S] cluster: cysteine 95, cysteine 126, cysteine 186, and arginine 258.

This sequence belongs to the radical SAM superfamily. Biotin synthase family. In terms of assembly, homodimer. It depends on [4Fe-4S] cluster as a cofactor. The cofactor is [2Fe-2S] cluster.

The catalysed reaction is (4R,5S)-dethiobiotin + (sulfur carrier)-SH + 2 reduced [2Fe-2S]-[ferredoxin] + 2 S-adenosyl-L-methionine = (sulfur carrier)-H + biotin + 2 5'-deoxyadenosine + 2 L-methionine + 2 oxidized [2Fe-2S]-[ferredoxin]. Its pathway is cofactor biosynthesis; biotin biosynthesis; biotin from 7,8-diaminononanoate: step 2/2. Its function is as follows. Catalyzes the conversion of dethiobiotin (DTB) to biotin by the insertion of a sulfur atom into dethiobiotin via a radical-based mechanism. In Buchnera aphidicola subsp. Acyrthosiphon pisum (strain APS) (Acyrthosiphon pisum symbiotic bacterium), this protein is Biotin synthase.